A 270-amino-acid chain; its full sequence is NADPH-dependent aldehyde reductase-like protein, chloroplastic (270 aa).

Residues 1–53 constitute a chloroplast transit peptide; the sequence is MSTHSSISQPPLPLAGRVAIVTGSSRGIGRAIAIHLAELGARIVINYTSKAAD. Residue 26–50 participates in NADP(+) binding; the sequence is RGIGRAIAIHLAELGARIVINYTSK. Ser165 provides a ligand contact to substrate. The active-site Proton acceptor is the Tyr178.

It belongs to the short-chain dehydrogenases/reductases (SDR) family.

The protein resides in the plastid. It localises to the chloroplast. Functionally, aldehyde reductase that catalyzes the reduction of the aldehyde carbonyl groups on saturated and alpha,beta-unsaturated aldehydes with more than 5 carbons. The sequence is that of NADPH-dependent aldehyde reductase-like protein, chloroplastic from Arabidopsis thaliana (Mouse-ear cress).